The primary structure comprises 599 residues: Aspartate--tRNA(Asp/Asn) ligase (599 aa).

L-aspartate is bound at residue Glu172. Residues 196–199 (QLFK) are aspartate. L-aspartate is bound at residue Arg218. Residues 218-220 (RDE) and Gln227 contribute to the ATP site. Residue His455 participates in L-aspartate binding. Glu489 lines the ATP pocket. An L-aspartate-binding site is contributed by Arg496. 541-544 (GLDR) is a binding site for ATP.

Belongs to the class-II aminoacyl-tRNA synthetase family. Type 1 subfamily. In terms of assembly, homodimer.

It localises to the cytoplasm. It carries out the reaction tRNA(Asx) + L-aspartate + ATP = L-aspartyl-tRNA(Asx) + AMP + diphosphate. Its function is as follows. Aspartyl-tRNA synthetase with relaxed tRNA specificity since it is able to aspartylate not only its cognate tRNA(Asp) but also tRNA(Asn). Reaction proceeds in two steps: L-aspartate is first activated by ATP to form Asp-AMP and then transferred to the acceptor end of tRNA(Asp/Asn). The chain is Aspartate--tRNA(Asp/Asn) ligase from Herminiimonas arsenicoxydans.